The sequence spans 382 residues: ATP phosphoribosyltransferase regulatory subunit (382 aa).

This sequence belongs to the class-II aminoacyl-tRNA synthetase family. HisZ subfamily. Heteromultimer composed of HisG and HisZ subunits.

It localises to the cytoplasm. The protein operates within amino-acid biosynthesis; L-histidine biosynthesis; L-histidine from 5-phospho-alpha-D-ribose 1-diphosphate: step 1/9. Functionally, required for the first step of histidine biosynthesis. May allow the feedback regulation of ATP phosphoribosyltransferase activity by histidine. In Burkholderia cenocepacia (strain ATCC BAA-245 / DSM 16553 / LMG 16656 / NCTC 13227 / J2315 / CF5610) (Burkholderia cepacia (strain J2315)), this protein is ATP phosphoribosyltransferase regulatory subunit.